Consider the following 2925-residue polypeptide: Otogelin (2925 aa).

Residues 1–25 form the signal peptide; that stretch reads MGVLASALCWLLCVWLPWGEQAAES. The segment at 39 to 69 is disordered; sequence GRSGARGMRNVKGMRNGPAQTRVSSSSSHQE. Over residues 56–69 the composition is skewed to polar residues; sequence PAQTRVSSSSSHQE. One can recognise an EGF-like domain in the interval 102–139; sequence HRAKCAPSYLFSCFNGGECVHPAFCDCRRFNATGPRCQ. 5 cysteine pairs are disulfide-bonded: Cys-106–Cys-120, Cys-114–Cys-126, Cys-128–Cys-138, Cys-152–Cys-285, and Cys-199–Cys-206. The 173-residue stretch at 150–322 folds into the VWFD 1 domain; sequence SICRAWGQHH…SWQEQAPNQP (173 aa). Positions 316-335 are disordered; sequence EQAPNQPPGPTTSSLPRPPC. The segment covering 326-335 has biased composition (polar residues); it reads TTSSLPRPPC. The VWFD 2 domain occupies 512 to 688; that stretch reads AECSVTGDIH…NSWKTLSACS (177 aa). Intrachain disulfides connect Cys-514–Cys-652, Cys-536–Cys-687, and Cys-558–Cys-566. Residues 780–844 form the TIL domain; sequence CEASKEYSPC…ADLCVPRNQC (65 aa). N-linked (GlcNAc...) asparagine glycosylation occurs at Asn-914. The VWFD 3 domain occupies 984–1152; the sequence is STCTAYGDRH…SWAAVECPDT (169 aa). Intrachain disulfides connect Cys-986/Cys-1115 and Cys-1030/Cys-1037. Positions 1476 to 1540 are disordered; that stretch reads LGNETLPPSQ…PVVSPGPTQT (65 aa). An N-linked (GlcNAc...) asparagine glycan is attached at Asn-1478. Positions 1502–1528 are enriched in low complexity; that stretch reads PRTPTHRPALTPAAPLTTALNPPVTAT. The N-linked (GlcNAc...) asparagine glycan is linked to Asn-1612. Disordered regions lie at residues 1636-1679, 1693-1715, and 1737-1788; these read GHGS…HKAV, VPQP…AGTA, and KGEA…ASLS. Residues 1650–1659 show a composition bias toward polar residues; that stretch reads SLTASPSSRP. Positions 1694-1708 are enriched in low complexity; it reads PQPTQAQSASSPSTP. The segment covering 1751-1764 has biased composition (pro residues); sequence SPQPHPLPSAPPRP. The VWFD 4 domain occupies 2110-2289; sequence CRCSIFPDLS…SWQVPSSLTS (180 aa). 5 disulfide bridges follow: Cys-2112–Cys-2249, Cys-2840–Cys-2889, Cys-2854–Cys-2903, Cys-2865–Cys-2920, and Cys-2869–Cys-2922. Positions 2840 to 2925 constitute a CTCK domain; that stretch reads CKKVTIRMTI…EPTDCACQWS (86 aa).

This sequence belongs to the otogelin family. In terms of processing, N-glycosylated. Not O-glycosylated.

The protein localises to the apical cell membrane. The protein resides in the secreted. It is found in the extracellular space. Its function is as follows. Glycoprotein specific to acellular membranes of the inner ear. May be required for the anchoring of the otoconial membranes and cupulae to the underlying neuroepithelia in the vestibule. May be involved in the organization and/or stabilization of the fibrillar network that compose the tectorial membrane in the cochlea. May play a role in mechanotransduction processes. The sequence is that of Otogelin (OTOG) from Homo sapiens (Human).